The chain runs to 499 residues: Increased recombination centers protein 15 (499 aa).

Residue 47–56 (DQRASLGGAY) participates in FAD binding.

This sequence belongs to the class-I pyridine nucleotide-disulfide oxidoreductase family.

It is found in the cytoplasm. The protein is Increased recombination centers protein 15 (IRC15) of Saccharomyces cerevisiae (strain ATCC 204508 / S288c) (Baker's yeast).